The chain runs to 532 residues: Probable C4-dicarboxylate sensor kinase (532 aa).

Topologically, residues 1–12 (MRLFRQLSIQWK) are cytoplasmic. A helical membrane pass occupies residues 13–33 (ITILSFGIVAFALMMVSISLL). Residues 34 to 175 (GYVTSIKEDE…YADMIQEFWQ (142 aa)) lie on the Extracellular side of the membrane. Residues 176-196 (PALLIGLITALFGFWGSWLLA) traverse the membrane as a helical segment. The Cytoplasmic portion of the chain corresponds to 197 to 532 (SHIKRQTFNM…FSIYLPKKRG (336 aa)). In terms of domain architecture, PAS spans 216–279 (VERDASFNAI…PEILSIGKPL (64 aa)). Residues 315–531 (SDVDRLAEEL…TFSIYLPKKR (217 aa)) form the Histidine kinase domain. A Phosphohistidine; by autocatalysis modification is found at H339.

It localises to the cell membrane. The catalysed reaction is ATP + protein L-histidine = ADP + protein N-phospho-L-histidine.. Its function is as follows. Member of the two-component regulatory system DctS/DctR. Probably activates DctR by phosphorylation. Essential for expression of dctP. The polypeptide is Probable C4-dicarboxylate sensor kinase (dctS) (Halalkalibacterium halodurans (strain ATCC BAA-125 / DSM 18197 / FERM 7344 / JCM 9153 / C-125) (Bacillus halodurans)).